The primary structure comprises 339 residues: Adenylosuccinate synthetase (339 aa).

Residues 12–18 (GDEGKGS) and 42–44 (GHS) contribute to the GTP site. Asp-13 functions as the Proton acceptor in the catalytic mechanism. Residues Asp-13 and Gly-42 each coordinate Mg(2+). IMP-binding positions include 13 to 16 (DEGK), 40 to 43 (NAGH), Thr-127, Arg-141, Gln-179, Thr-194, and Arg-256. The active-site Proton donor is the His-43. Residue 252-258 (TVTGRRR) coordinates substrate. GTP contacts are provided by residues Arg-258, 284–286 (MLD), and 324–326 (KTG).

It belongs to the adenylosuccinate synthetase family. Homodimer. The cofactor is Mg(2+).

The protein resides in the cytoplasm. It catalyses the reaction IMP + L-aspartate + GTP = N(6)-(1,2-dicarboxyethyl)-AMP + GDP + phosphate + 2 H(+). It functions in the pathway purine metabolism; AMP biosynthesis via de novo pathway; AMP from IMP: step 1/2. Functionally, plays an important role in the de novo pathway of purine nucleotide biosynthesis. Catalyzes the first committed step in the biosynthesis of AMP from IMP. This chain is Adenylosuccinate synthetase, found in Pyrococcus sp. (strain ST700).